We begin with the raw amino-acid sequence, 200 residues long: uncharacterized protein (200 aa).

This sequence belongs to the HAD-like hydrolase superfamily. CbbY/CbbZ/Gph/YieH family.

This is an uncharacterized protein from Haemophilus influenzae (strain ATCC 51907 / DSM 11121 / KW20 / Rd).